Consider the following 127-residue polypeptide: MACTREDVIEYISNLSVLELSELVKEFEEKFGVSAQPTVVAGAVAAGGAEGGAAAEEKTEFDVVLTDAGPKKINTIKVIRQVTGLGLKEAKEAAENTPTVIKEGVSKEEAEELKKQFEEAGAKVEIK.

The protein belongs to the bacterial ribosomal protein bL12 family. Homodimer. Part of the ribosomal stalk of the 50S ribosomal subunit. Forms a multimeric L10(L12)X complex, where L10 forms an elongated spine to which 2 to 4 L12 dimers bind in a sequential fashion. Binds GTP-bound translation factors.

In terms of biological role, forms part of the ribosomal stalk which helps the ribosome interact with GTP-bound translation factors. Is thus essential for accurate translation. The protein is Large ribosomal subunit protein bL12 of Nitratiruptor sp. (strain SB155-2).